We begin with the raw amino-acid sequence, 346 residues long: Holliday junction branch migration complex subunit RuvB (346 aa).

A large ATPase domain (RuvB-L) region spans residues 1-183; that stretch reads MTEQRIIASS…FGIVQRLEFY (183 aa). Residues I22, R23, G64, K67, T68, T69, 130–132, R173, Y183, and R220 contribute to the ATP site; that span reads EDF. T68 serves as a coordination point for Mg(2+). The segment at 184-254 is small ATPAse domain (RuvB-S); the sequence is SPQELTRIVS…VAQAAMQMLK (71 aa). Residues 257 to 346 are head domain (RuvB-H); the sequence is PEGFDELDRR…PGIGEPGDLF (90 aa). The DNA site is built by R293, R312, and R317.

This sequence belongs to the RuvB family. Homohexamer. Forms an RuvA(8)-RuvB(12)-Holliday junction (HJ) complex. HJ DNA is sandwiched between 2 RuvA tetramers; dsDNA enters through RuvA and exits via RuvB. An RuvB hexamer assembles on each DNA strand where it exits the tetramer. Each RuvB hexamer is contacted by two RuvA subunits (via domain III) on 2 adjacent RuvB subunits; this complex drives branch migration. In the full resolvosome a probable DNA-RuvA(4)-RuvB(12)-RuvC(2) complex forms which resolves the HJ.

It localises to the cytoplasm. The enzyme catalyses ATP + H2O = ADP + phosphate + H(+). The RuvA-RuvB-RuvC complex processes Holliday junction (HJ) DNA during genetic recombination and DNA repair, while the RuvA-RuvB complex plays an important role in the rescue of blocked DNA replication forks via replication fork reversal (RFR). RuvA specifically binds to HJ cruciform DNA, conferring on it an open structure. The RuvB hexamer acts as an ATP-dependent pump, pulling dsDNA into and through the RuvAB complex. RuvB forms 2 homohexamers on either side of HJ DNA bound by 1 or 2 RuvA tetramers; 4 subunits per hexamer contact DNA at a time. Coordinated motions by a converter formed by DNA-disengaged RuvB subunits stimulates ATP hydrolysis and nucleotide exchange. Immobilization of the converter enables RuvB to convert the ATP-contained energy into a lever motion, pulling 2 nucleotides of DNA out of the RuvA tetramer per ATP hydrolyzed, thus driving DNA branch migration. The RuvB motors rotate together with the DNA substrate, which together with the progressing nucleotide cycle form the mechanistic basis for DNA recombination by continuous HJ branch migration. Branch migration allows RuvC to scan DNA until it finds its consensus sequence, where it cleaves and resolves cruciform DNA. The chain is Holliday junction branch migration complex subunit RuvB from Xanthomonas euvesicatoria pv. vesicatoria (strain 85-10) (Xanthomonas campestris pv. vesicatoria).